The chain runs to 63 residues: Conotoxin Vi5.1b (63 aa).

The N-terminal stretch at 1–22 (MLCVPVFIILFIIIPFAPTSES) is a signal peptide. Residues 23–50 (QPKTKEEVAKASVHDNAERTLQRLWNQS) constitute a propeptide that is removed on maturation. Pro62 is modified (proline amide).

The protein belongs to the conotoxin T superfamily. Post-translationally, contains 2 disulfide bonds that can be either 'C1-C3, C2-C4' or 'C1-C4, C2-C3', since these disulfide connectivities have been observed for conotoxins with cysteine framework V (for examples, see AC P0DQQ7 and AC P81755). Expressed by the venom duct.

Its subcellular location is the secreted. The sequence is that of Conotoxin Vi5.1b from Conus virgo (Virgin cone).